A 737-amino-acid polypeptide reads, in one-letter code: Delta and Notch-like epidermal growth factor-related receptor (737 aa).

A signal peptide spans 1 to 34; it reads MQPRRAQAPGAQLLPALALLLLLLGAGPRGSSLA. Residues 35 to 640 lie on the Extracellular side of the membrane; it reads NPVPAAPLSA…LTNMPRHSLY (606 aa). 2 consecutive EGF-like domains span residues 44–92 and 94–133; these read APGP…ANCQ and VADP…PNCE. Residues 44-133 are interaction with NOTCH1; sequence APGPCAAQPC…NEGYEGPNCE (90 aa). 6 disulfides stabilise this stretch: Cys48–Cys59, Cys53–Cys80, Cys82–Cys91, Cys98–Cys108, Cys103–Cys121, and Cys123–Cys132. Residue Asn223 is glycosylated (N-linked (GlcNAc...) asparagine). EGF-like domains are found at residues 309–348, 349–390, 392–428, 430–466, and 468–503; these read PGES…TFCE, EYDA…ELCQ, KIDY…SACE, KVDP…PTCA, and LIDF…LYCE. Cystine bridges form between Cys319–Cys336, Cys338–Cys347, Cys353–Cys364, Cys358–Cys378, Cys380–Cys389, Cys396–Cys407, Cys401–Cys416, Cys418–Cys427, Cys434–Cys445, Cys439–Cys454, Cys456–Cys465, Cys472–Cys482, Cys477–Cys491, Cys493–Cys502, Cys509–Cys520, Cys514–Cys529, Cys531–Cys540, Cys547–Cys558, Cys552–Cys567, Cys569–Cys578, Cys585–Cys596, Cys590–Cys605, and Cys607–Cys616. The region spanning 505-541 is the EGF-like 8; calcium-binding domain; the sequence is EYNECLSAPCLNAATCRDLVNGYECVCLAEYKGTHCE. Positions 543-579 constitute an EGF-like 9 domain; sequence YKDPCANVSCLNGATCDSDGLNGTCICAPGFTGEECD. Residues 546-568 enclose the Follistatin-like domain; sequence PCANVSCLNGATCDSDGLNGTCI. The N-linked (GlcNAc...) asparagine glycan is linked to Asn564. The region spanning 581-617 is the EGF-like 10; calcium-binding domain; the sequence is DINECDSNPCHHGGSCLDQPNGYNCHCPHGWVGANCE. Residues 641–661 form a helical membrane-spanning segment; the sequence is IIIGALCVAFILMLIILIVGI. Residues 662-737 are Cytoplasmic-facing; that stretch reads CRISRIEYQG…LVTLIKTKDL (76 aa). Residues 677-680 form an interaction with AP1G1 and somatodendritic targeting region; sequence YEEF. Ser685 carries the post-translational modification Phosphoserine. 2 positions are modified to phosphotyrosine: Tyr711 and Tyr721. Ser722 bears the Phosphoserine mark.

As to quaternary structure, interacts with AP1G1. Interacts with NOTCH1. In terms of tissue distribution, expressed in brain, spinal cord and adrenal gland.

The protein localises to the cell membrane. In terms of biological role, activator of the NOTCH1 pathway. May mediate neuron-glia interaction during astrocytogenesis. The chain is Delta and Notch-like epidermal growth factor-related receptor (DNER) from Homo sapiens (Human).